A 205-amino-acid polypeptide reads, in one-letter code: Probable thymidylate kinase (205 aa).

Position 7 to 14 (7 to 14) interacts with ATP; that stretch reads GIDGAGKS.

This sequence belongs to the thymidylate kinase family.

It carries out the reaction dTMP + ATP = dTDP + ADP. The protein is Probable thymidylate kinase of Thermococcus kodakarensis (strain ATCC BAA-918 / JCM 12380 / KOD1) (Pyrococcus kodakaraensis (strain KOD1)).